Reading from the N-terminus, the 136-residue chain is NLP effector protein 13 (136 aa).

Residues 1–9 (MYSWYFPKD) carry the Conserved undecapeptide motif I motif. The Hepta-peptide GHRHDWE motif II signature appears at 16 to 22 (GHRHDWE).

It belongs to the Necrosis inducing protein (NPP1) family.

The protein resides in the secreted. Functionally, secreted effector that contributes moderately to virulence during infection by P.capsici. Causes only small yellow areas at 3 days after inoculation of host C.annuum leaves; these areas expand somewhat and became necrotic at 7 days after inoculation. Leads only to chlorotic areas, without necrosis at 7 days after non-host N.benthamiana leaves infection. The protein is NLP effector protein 13 of Phytophthora capsici.